We begin with the raw amino-acid sequence, 374 residues long: DNA replication and repair protein RecF (374 aa).

Position 30–37 (30–37 (GPNAQGKT)) interacts with ATP.

Belongs to the RecF family.

Its subcellular location is the cytoplasm. Its function is as follows. The RecF protein is involved in DNA metabolism; it is required for DNA replication and normal SOS inducibility. RecF binds preferentially to single-stranded, linear DNA. It also seems to bind ATP. This chain is DNA replication and repair protein RecF, found in Lactobacillus gasseri (strain ATCC 33323 / DSM 20243 / BCRC 14619 / CIP 102991 / JCM 1131 / KCTC 3163 / NCIMB 11718 / NCTC 13722 / AM63).